A 214-amino-acid chain; its full sequence is Orotate phosphoribosyltransferase (214 aa).

5-phospho-alpha-D-ribose 1-diphosphate-binding positions include Arg-125, Lys-126, Lys-129, His-131, and 151 to 159 (EDTSTTGNS). Thr-155 and Arg-183 together coordinate orotate.

The protein belongs to the purine/pyrimidine phosphoribosyltransferase family. PyrE subfamily. Homodimer. Mg(2+) serves as cofactor.

It carries out the reaction orotidine 5'-phosphate + diphosphate = orotate + 5-phospho-alpha-D-ribose 1-diphosphate. It functions in the pathway pyrimidine metabolism; UMP biosynthesis via de novo pathway; UMP from orotate: step 1/2. In terms of biological role, catalyzes the transfer of a ribosyl phosphate group from 5-phosphoribose 1-diphosphate to orotate, leading to the formation of orotidine monophosphate (OMP). This is Orotate phosphoribosyltransferase from Tropheryma whipplei (strain Twist) (Whipple's bacillus).